Consider the following 127-residue polypeptide: Holo-[acyl-carrier-protein] synthase (127 aa).

Mg(2+) contacts are provided by Asp9 and Glu58.

Belongs to the P-Pant transferase superfamily. AcpS family. Requires Mg(2+) as cofactor.

It is found in the cytoplasm. The catalysed reaction is apo-[ACP] + CoA = holo-[ACP] + adenosine 3',5'-bisphosphate + H(+). Its function is as follows. Transfers the 4'-phosphopantetheine moiety from coenzyme A to a Ser of acyl-carrier-protein. The polypeptide is Holo-[acyl-carrier-protein] synthase (Shewanella baltica (strain OS155 / ATCC BAA-1091)).